A 280-amino-acid polypeptide reads, in one-letter code: Small ribosomal subunit protein uS3 (280 aa).

One can recognise a KH type-2 domain in the interval 38 to 106 (IRRLLSTGLE…QVQLNILEVR (69 aa)). Residues 215 to 280 (AAAAPAGAER…PAAEPQSTES (66 aa)) form a disordered region. The segment covering 238 to 280 (SGASGTTATGTEAGRAAASADESTAAGQPAEAAPAAEPQSTES) has biased composition (low complexity).

The protein belongs to the universal ribosomal protein uS3 family. In terms of assembly, part of the 30S ribosomal subunit. Forms a tight complex with proteins S10 and S14.

Its function is as follows. Binds the lower part of the 30S subunit head. Binds mRNA in the 70S ribosome, positioning it for translation. This chain is Small ribosomal subunit protein uS3, found in Mycolicibacterium paratuberculosis (strain ATCC BAA-968 / K-10) (Mycobacterium paratuberculosis).